The chain runs to 193 residues: Auxin-responsive protein IAA23 (193 aa).

Positions Met1–Pro12 are enriched in polar residues. Residues Met1–Pro66 form a disordered region. Residues Thr21–Ser36 are compositionally biased toward low complexity. Residues Leu23–Leu27 carry the EAR-like (transcriptional repression) motif. The segment covering Asp39–Ala53 has biased composition (basic and acidic residues). The 109-residue stretch at Ala83–Ser191 folds into the PB1 domain.

This sequence belongs to the Aux/IAA family. As to quaternary structure, homodimers and heterodimers. Highly expressed in roots. Expressed in seedlings.

The protein localises to the nucleus. Its function is as follows. Aux/IAA proteins are short-lived transcriptional factors that function as repressors of early auxin response genes at low auxin concentrations. The protein is Auxin-responsive protein IAA23 (IAA23) of Oryza sativa subsp. japonica (Rice).